Here is a 382-residue protein sequence, read N- to C-terminus: Pectinesterase (382 aa).

Residues 1–16 form the signal peptide; the sequence is MKIIVLLLLAVVLASA. Cys-153 and Cys-164 form a disulfide bridge. Asn-179 is a glycosylation site (N-linked (GlcNAc...) asparagine). Substrate is bound at residue Gln-193. The active-site Proton donor is the Asp-216. Asp-242 serves as the catalytic Nucleophile. Substrate contacts are provided by Arg-306 and Trp-308. N-linked (GlcNAc...) asparagine glycosylation is found at Asn-340 and Asn-376.

The protein belongs to the pectinesterase family. As to expression, expressed throughout the midgut with particularly strong expression in the ventriculus.

It is found in the secreted. It carries out the reaction [(1-&gt;4)-alpha-D-galacturonosyl methyl ester](n) + n H2O = [(1-&gt;4)-alpha-D-galacturonosyl](n) + n methanol + n H(+). It functions in the pathway glycan metabolism; pectin degradation; 2-dehydro-3-deoxy-D-gluconate from pectin: step 1/5. Pectinesterase which probably plays an important role in the digestion of plant cell walls. The polypeptide is Pectinesterase (Sitophilus oryzae (Rice weevil)).